Consider the following 323-residue polypeptide: Serine/threonine-protein phosphatase PP1 (323 aa).

Positions 63, 65, 91, and 123 each coordinate Mn(2+). Catalysis depends on His-124, which acts as the Proton donor. Mn(2+)-binding residues include His-172 and His-247.

This sequence belongs to the PPP phosphatase family. PP-1 subfamily. It depends on Mn(2+) as a cofactor.

The enzyme catalyses O-phospho-L-seryl-[protein] + H2O = L-seryl-[protein] + phosphate. The catalysed reaction is O-phospho-L-threonyl-[protein] + H2O = L-threonyl-[protein] + phosphate. Its function is as follows. Plays an important role in the control of mitosis by reversing the action of the nimA kinase. The chain is Serine/threonine-protein phosphatase PP1 (bimG) from Emericella nidulans (strain FGSC A4 / ATCC 38163 / CBS 112.46 / NRRL 194 / M139) (Aspergillus nidulans).